The primary structure comprises 134 residues: Large ribosomal subunit protein mL41 (134 aa).

Residues 1–13 constitute a mitochondrion transit peptide; sequence MGFLTAVTQGLVR.

It belongs to the mitochondrion-specific ribosomal protein mL41 family. Component of the mitochondrial ribosome large subunit (39S) which comprises a 16S rRNA and about 50 distinct proteins. Interacts with BCL2. Was also identified in the 28S mitochondrial ribosome.

It is found in the mitochondrion. In terms of biological role, component of the mitochondrial ribosome large subunit. Also involved in apoptosis and cell cycle. Enhances p53/TP53 stability, thereby contributing to p53/TP53-induced apoptosis in response to growth-inhibitory condition. Enhances p53/TP53 translocation to the mitochondria. Has the ability to arrest the cell cycle at the G1 phase, possibly by stabilizing the CDKN1A and CDKN1B (p27Kip1) proteins. The protein is Large ribosomal subunit protein mL41 (Mrpl41) of Rattus norvegicus (Rat).